Consider the following 142-residue polypeptide: Transcription antitermination protein NusB (142 aa).

The protein belongs to the NusB family.

In terms of biological role, involved in transcription antitermination. Required for transcription of ribosomal RNA (rRNA) genes. Binds specifically to the boxA antiterminator sequence of the ribosomal RNA (rrn) operons. The chain is Transcription antitermination protein NusB from Streptococcus uberis (strain ATCC BAA-854 / 0140J).